The primary structure comprises 316 residues: Coiled-coil domain-containing protein 42 (316 aa).

2 coiled-coil regions span residues 39–146 and 178–232; these read SPSI…SAKL and LVSM…DRAR.

The protein belongs to the CFAP73 family. In terms of assembly, interacts with ODF1 and ODF2. Interacts with CCDC38. Interacts with CCDC146. Interacts with CFAP53.

It localises to the cytoplasm. Its subcellular location is the perinuclear region. The protein localises to the cytoskeleton. It is found in the cell projection. The protein resides in the cilium. It localises to the flagellum. Its subcellular location is the microtubule organizing center. The protein localises to the centrosome. Its function is as follows. Essential for male fertility. Required for sperm development. The protein is Coiled-coil domain-containing protein 42 of Homo sapiens (Human).